A 96-amino-acid polypeptide reads, in one-letter code: Cytoplasmic envelopment protein 3 (96 aa).

Residue G2 is the site of N-myristoyl glycine; by host attachment. An asp/Glu-rich (acidic) region spans residues 37 to 43 (DIESEEE). Position 40 is a phosphoserine (S40). The disordered stretch occupies residues 50-96 (PDVRVVTRAPGPQYRRPSDPPSRHTRRRDPDVARPPATLTPPLSDSE). Basic and acidic residues predominate over residues 65–81 (RPSDPPSRHTRRRDPDV).

This sequence belongs to the herpesviridae cytoplasmic envelopment protein 3 family. As to quaternary structure, interacts with cytoplasmic envelopment protein 2; this interaction is essential for the proper localization of each protein to the assembly complex and thus for the production of infectious virus. Interacts with gE (via C-terminus). Interacts with gD (via C-terminus). Interacts with UL56. Post-translationally, myristoylation and palmitoylation (probably on one or more of the nearby cysteines at the N-terminus) enable membrane-binding and Golgi apparatus-specific targeting and are essential for efficient packaging. Phosphorylated. Phosphorylation does not seem to be required for recycling to the host Golgi apparatus. Packaging is selective for underphosphorylated forms.

It is found in the virion tegument. It localises to the virion membrane. Its subcellular location is the host cell membrane. The protein localises to the host Golgi apparatus membrane. In terms of biological role, plays an important role in the cytoplasmic envelopment of tegument proteins and capsids during the assembly and egress processes. Also participates in viral entry at the fusion step probably by regulating the core fusion machinery. This is Cytoplasmic envelopment protein 3 from Homo sapiens (Human).